The primary structure comprises 442 residues: MPAVPLESRLLQALAPWREAGGWCVAFSGGLDSTVLLHLLAQLARSEALPALSALHVHHGLQAAADGWPAHCQAVCRSLGIPLRVERVQVAVGGSIEQAARDARYRAFQANLGEGQVLLTAQHLDDQAETLLFRLLRGAGLRGLAAMPASRPLGGGRLCRPLLGVSRAELEAYAQAHRLDWVEDPSNQDPRFSRNYLRREIMPRLASHWPQAVAGMARCAAHLREAEDLLAELAAIDLRACRQPSELDWPDWLDLPRIALEPLRRLSAARQRNLLRAWLGQLTRLPDSDHWAGWESLRDAGDDADPIWRLESGELRRGAGRIWWLPADWRAAAGPFVWERPAHPLLLPGNGRLALLGEVPAGPLRVDYRRGGEVLALAGRGRRDLKRLLNEAGVPSFLRGRLPLLFRADELLAVANIPGLDSPREGGWRLSWSPPTNDPGLS.

28 to 33 (SGGLDS) is a binding site for ATP.

The protein belongs to the tRNA(Ile)-lysidine synthase family.

It is found in the cytoplasm. The catalysed reaction is cytidine(34) in tRNA(Ile2) + L-lysine + ATP = lysidine(34) in tRNA(Ile2) + AMP + diphosphate + H(+). In terms of biological role, ligates lysine onto the cytidine present at position 34 of the AUA codon-specific tRNA(Ile) that contains the anticodon CAU, in an ATP-dependent manner. Cytidine is converted to lysidine, thus changing the amino acid specificity of the tRNA from methionine to isoleucine. The protein is tRNA(Ile)-lysidine synthase of Pseudomonas aeruginosa (strain ATCC 15692 / DSM 22644 / CIP 104116 / JCM 14847 / LMG 12228 / 1C / PRS 101 / PAO1).